The sequence spans 139 residues: Putative pre-16S rRNA nuclease (139 aa).

This sequence belongs to the YqgF nuclease family.

It is found in the cytoplasm. Its function is as follows. Could be a nuclease involved in processing of the 5'-end of pre-16S rRNA. The sequence is that of Putative pre-16S rRNA nuclease from Streptococcus pyogenes serotype M49 (strain NZ131).